The following is a 474-amino-acid chain: ATP synthase subunit beta (474 aa).

Position 152–159 (152–159 (GGAGVGKT)) interacts with ATP.

It belongs to the ATPase alpha/beta chains family. F-type ATPases have 2 components, CF(1) - the catalytic core - and CF(0) - the membrane proton channel. CF(1) has five subunits: alpha(3), beta(3), gamma(1), delta(1), epsilon(1). CF(0) has four main subunits: a(1), b(1), b'(1) and c(9-12).

The protein resides in the cell inner membrane. It catalyses the reaction ATP + H2O + 4 H(+)(in) = ADP + phosphate + 5 H(+)(out). In terms of biological role, produces ATP from ADP in the presence of a proton gradient across the membrane. The catalytic sites are hosted primarily by the beta subunits. This chain is ATP synthase subunit beta, found in Rhodospirillum rubrum (strain ATCC 11170 / ATH 1.1.1 / DSM 467 / LMG 4362 / NCIMB 8255 / S1).